We begin with the raw amino-acid sequence, 391 residues long: Formate-dependent phosphoribosylglycinamide formyltransferase (391 aa).

N(1)-(5-phospho-beta-D-ribosyl)glycinamide contacts are provided by residues 20-21 (EL) and Glu-80. ATP-binding positions include Arg-112, Lys-153, 158–163 (SSGKGQ), 193–196 (EGFI), and Glu-201. In terms of domain architecture, ATP-grasp spans 117–306 (RLAAEELGLT…EFALHVRAFT (190 aa)). Residues Glu-265 and Glu-277 each coordinate Mg(2+). N(1)-(5-phospho-beta-D-ribosyl)glycinamide is bound by residues Asp-284, Lys-354, and 361–362 (RR).

It belongs to the PurK/PurT family. As to quaternary structure, homodimer.

The enzyme catalyses N(1)-(5-phospho-beta-D-ribosyl)glycinamide + formate + ATP = N(2)-formyl-N(1)-(5-phospho-beta-D-ribosyl)glycinamide + ADP + phosphate + H(+). It functions in the pathway purine metabolism; IMP biosynthesis via de novo pathway; N(2)-formyl-N(1)-(5-phospho-D-ribosyl)glycinamide from N(1)-(5-phospho-D-ribosyl)glycinamide (formate route): step 1/1. Functionally, involved in the de novo purine biosynthesis. Catalyzes the transfer of formate to 5-phospho-ribosyl-glycinamide (GAR), producing 5-phospho-ribosyl-N-formylglycinamide (FGAR). Formate is provided by PurU via hydrolysis of 10-formyl-tetrahydrofolate. The protein is Formate-dependent phosphoribosylglycinamide formyltransferase of Vibrio vulnificus (strain CMCP6).